A 285-amino-acid chain; its full sequence is Protein FD (285 aa).

Residues Met-1 to Arg-12 are compositionally biased toward basic residues. 5 disordered regions span residues Met-1 to Ser-59, Asn-79 to Phe-107, Leu-115 to Ser-134, Ser-198 to Gln-236, and Lys-257 to Phe-285. A compositionally biased stretch (polar residues) spans Leu-13–Val-25. Residues Ser-26–Ser-50 are compositionally biased toward low complexity. Over residues His-98–Phe-107 the composition is skewed to polar residues. The region spanning Gly-214–Leu-277 is the bZIP domain. The tract at residues Arg-216–Lys-235 is basic motif. The tract at residues Leu-242–Leu-263 is leucine-zipper. The segment covering Pro-272 to Phe-285 has biased composition (polar residues). Thr-282 bears the Phosphothreonine mark.

The protein belongs to the bZIP family. As to quaternary structure, self-interacts. Interacts with FT and FDP/BZIP27. Interacts with GRF3 and GRF4, and in a calcium-independent manner, with CPK6 and CPK33. In terms of processing, phosphorylated at Thr-282 in a calcium-dependent manner by CPK6 and CPK33. In terms of tissue distribution, highly expressed in shoot apex.

It is found in the nucleus. In terms of biological role, transcription factor required for the transition to flowering promoted by FT. This is Protein FD from Arabidopsis thaliana (Mouse-ear cress).